A 1117-amino-acid chain; its full sequence is Rhoptry apical surface protein 3 (1117 aa).

Residues 1-12 (MENRPRQQTSGH) show a composition bias toward polar residues. Disordered regions lie at residues 1 to 27 (MENR…SRPG), 47 to 243 (NHER…SHFT), 258 to 301 (DSER…NKGI), 325 to 398 (SDFK…SLST), 415 to 442 (WNHA…FLAA), 490 to 572 (AEAV…ESEL), 600 to 619 (RPLL…ELRS), and 654 to 736 (QDGT…RLQG). Basic and acidic residues-rich tracts occupy residues 83–100 (DSNH…DSQK), 197–209 (TPLR…RHVS), and 275–300 (MKPK…DNKG). Low complexity-rich tracts occupy residues 418–442 (ASPG…FLAA) and 490–508 (AEAV…GDSS). Over residues 510–520 (ESDHSGRERSR) the composition is skewed to basic and acidic residues. The span at 530–540 (NEITTMRSQRS) shows a compositional bias: polar residues. Residues 546-555 (FSREPERESD) show a composition bias toward basic and acidic residues. Polar residues predominate over residues 557–569 (GEMTPTGETSGSE). Residues 724–734 (DADRKQEEKRL) are compositionally biased toward basic and acidic residues. One can recognise a BSD domain in the interval 752 to 788 (MLSVDRRLRKLHSDTAVRRMGETEFWKLYFYQVFLLM). Positions 829-838 (QTSGFTESDT) are enriched in polar residues. Disordered stretches follow at residues 829 to 848 (QTSG…YGFA), 858 to 891 (IIPP…APEQ), 909 to 964 (RSPS…GDSP), 1031 to 1066 (SSSQ…PSHL), and 1095 to 1117 (GTCG…GARA). The segment covering 839 to 848 (SSPSPSYGFA) has biased composition (low complexity). Residues 909–931 (RSPSLSSSSSGTTSVSARGTGSS) are compositionally biased toward low complexity. Polar residues predominate over residues 1031–1044 (SSSQVNGRVSTSRG). Composition is skewed to basic and acidic residues over residues 1046–1062 (MGED…RLEG) and 1108–1117 (KGKEVQGARA).

Interacts with RASP2.

It is found in the cytoplasmic vesicle. The protein localises to the secretory vesicle. The protein resides in the rhoptry membrane. The protein is Rhoptry apical surface protein 3 of Toxoplasma gondii (strain ATCC 50853 / GT1).